Reading from the N-terminus, the 304-residue chain is Ribonuclease Z (304 aa).

Zn(2+) contacts are provided by His-63, His-65, Asp-67, His-68, His-143, Asp-213, and His-271. The active-site Proton acceptor is the Asp-67.

The protein belongs to the RNase Z family. In terms of assembly, homodimer. Zn(2+) is required as a cofactor.

It catalyses the reaction Endonucleolytic cleavage of RNA, removing extra 3' nucleotides from tRNA precursor, generating 3' termini of tRNAs. A 3'-hydroxy group is left at the tRNA terminus and a 5'-phosphoryl group is left at the trailer molecule.. In terms of biological role, zinc phosphodiesterase, which displays some tRNA 3'-processing endonuclease activity. Probably involved in tRNA maturation, by removing a 3'-trailer from precursor tRNA. The sequence is that of Ribonuclease Z from Parabacteroides distasonis (strain ATCC 8503 / DSM 20701 / CIP 104284 / JCM 5825 / NCTC 11152).